The chain runs to 218 residues: Sodium channel regulatory subunit beta-1 (218 aa).

A signal peptide spans 1–18 (MGTLLALVVGAALVSSAW). Residues 19–157 (GGCVEVDSET…DKANRDMASI (139 aa)) are Extracellular-facing. Disulfide bonds link Cys-21/Cys-43 and Cys-40/Cys-121. Residues 22–150 (VEVDSETEAV…KIHIEVVDKA (129 aa)) form the Ig-like C2-type domain. Asn-93, Asn-110, Asn-114, and Asn-135 each carry an N-linked (GlcNAc...) asparagine glycan. A helical transmembrane segment spans residues 158 to 179 (VSEIMMYVLIVVLTIWLVAEMV). Residues 180–218 (YCYKKIAAATEAAAQENASEYLAITSESKENCTGVQVAE) are Cytoplasmic-facing.

It belongs to the sodium channel auxiliary subunit SCN1B (TC 8.A.17) family. In terms of assembly, a voltage-gated sodium (Nav) channel consists of an ion-conducting pore-forming alpha subunit functional on its own that is regulated by one or more beta subunits. Interacts with SCN1A; regulatory subunit of SCN1A/Nav1.1. Interacts with SCN3A; regulatory subunit of SCN3A/Nav1.3. Interacts with SCN4A; regulatory subunit of SCN4A/Nav1.4. Interacts with SCN5A; regulatory subunit of SCN5A/Nav1.5. Interacts with SCN8A; regulatory subunit of SCN8A/Nav1.6. Interacts with SCN9A; regulatory subunit of SCN9A/Nav1.7. Interacts with SCN10A; regulatory subunit of SCN10A/Nav1.8. Interacts with NFASC. Interacts with TMEM65.

Its subcellular location is the cell membrane. The protein resides in the perikaryon. The protein localises to the cell projection. It localises to the axon. In terms of biological role, regulatory subunit of multiple voltage-gated sodium (Nav) channels directly mediating the depolarization of excitable membranes. Navs, also called VGSCs (voltage-gated sodium channels) or VDSCs (voltage-dependent sodium channels), operate by switching between closed and open conformations depending on the voltage difference across the membrane. In the open conformation they allow Na(+) ions to selectively pass through the pore, along their electrochemical gradient. The influx of Na+ ions provokes membrane depolarization, initiating the propagation of electrical signals throughout cells and tissues. The accessory beta subunits participate in localization and functional modulation of the Nav channels. Modulates the activity of SCN1A/Nav1.1, SCN2A/Nav1.2, SCN3A/Nav1.3, SCN4A/Nav1.4, SCN5A/Nav1.5, SCN8A/Nav1.6, SCN9A/Nav1.7 and SCN10A/Nav1.8. The polypeptide is Sodium channel regulatory subunit beta-1 (Canis lupus familiaris (Dog)).